We begin with the raw amino-acid sequence, 153 residues long: Endoribonuclease YbeY (153 aa).

The Zn(2+) site is built by His114, His118, and His124.

This sequence belongs to the endoribonuclease YbeY family. Zn(2+) is required as a cofactor.

The protein resides in the cytoplasm. Functionally, single strand-specific metallo-endoribonuclease involved in late-stage 70S ribosome quality control and in maturation of the 3' terminus of the 16S rRNA. The sequence is that of Endoribonuclease YbeY from Nitrosococcus oceani (strain ATCC 19707 / BCRC 17464 / JCM 30415 / NCIMB 11848 / C-107).